The sequence spans 393 residues: Putative mitochondrial cysteine synthase (393 aa).

A helical membrane pass occupies residues 12 to 31 (LAWRECISIASVLIGAYASY). Position 86 is an N6-(pyridoxal phosphate)lysine (lysine 86). Residues 230-234 (GTGGT) and serine 338 each bind pyridoxal 5'-phosphate.

This sequence belongs to the cysteine synthase/cystathionine beta-synthase family. Pyridoxal 5'-phosphate is required as a cofactor.

It localises to the mitochondrion. The protein localises to the mitochondrion outer membrane. The catalysed reaction is O-acetyl-L-serine + hydrogen sulfide = L-cysteine + acetate. In terms of biological role, putative cysteine synthase that catalyzes the conversion of O-acetyl-L-serine (OAS) into cysteine, the last step in the cysteine biosynthesis pathway. However, this CS-like protein is unlikely to function in cysteine biosynthesis. It seems that in S.cerevisiae cysteine biosynthesis occurs exclusively through the cystathionine pathway and not via direct incorporation of sulfur into OAS. The protein is Putative mitochondrial cysteine synthase of Saccharomyces cerevisiae (strain ATCC 204508 / S288c) (Baker's yeast).